A 142-amino-acid polypeptide reads, in one-letter code: uncharacterized protein (142 aa).

Positions 1–14 (MKNVSPRRNKHYKS) are enriched in basic residues. The segment at 1–40 (MKNVSPRRNKHYKSYKPQVPLKKPVLLPQHPPYRNRRKKK) is disordered. A compositionally biased stretch (low complexity) spans 16–28 (KPQVPLKKPVLLP).

This is an uncharacterized protein from Aquifex aeolicus (strain VF5).